Consider the following 215-residue polypeptide: Cytochrome b6 (215 aa).

Residues Ile-32–Phe-52 form a helical membrane-spanning segment. Cys-35 is a heme c binding site. Residues His-86 and His-100 each coordinate heme b. The next 3 membrane-spanning stretches (helical) occupy residues Ala-90–Phe-110, Leu-116–Tyr-136, and Leu-186–Ile-206. Positions 187 and 202 each coordinate heme b.

This sequence belongs to the cytochrome b family. PetB subfamily. In terms of assembly, the 4 large subunits of the cytochrome b6-f complex are cytochrome b6, subunit IV (17 kDa polypeptide, PetD), cytochrome f and the Rieske protein, while the 4 small subunits are PetG, PetL, PetM and PetN. The complex functions as a dimer. The cofactor is heme b. It depends on heme c as a cofactor.

It localises to the plastid. The protein resides in the chloroplast thylakoid membrane. Component of the cytochrome b6-f complex, which mediates electron transfer between photosystem II (PSII) and photosystem I (PSI), cyclic electron flow around PSI, and state transitions. In Piper cenocladum (Ant piper), this protein is Cytochrome b6.